The following is a 117-amino-acid chain: Acidic phospholipase A2 (117 aa).

Cystine bridges form between Cys-11–Cys-70, Cys-25–Cys-116, Cys-27–Cys-43, Cys-42–Cys-98, Cys-49–Cys-91, Cys-59–Cys-84, and Cys-77–Cys-89. Residues Tyr-26, Gly-28, and Gly-30 each contribute to the Ca(2+) site. His-46 is a catalytic residue. Asp-47 lines the Ca(2+) pocket. Asn-80 carries an N-linked (GlcNAc...) asparagine glycan. Asp-92 is an active-site residue.

It depends on Ca(2+) as a cofactor. As to expression, expressed by the venom gland.

The protein resides in the secreted. It carries out the reaction a 1,2-diacyl-sn-glycero-3-phosphocholine + H2O = a 1-acyl-sn-glycero-3-phosphocholine + a fatty acid + H(+). Functionally, snake venom phospholipase A2 (PLA2) that shows strong myotoxicity and induces edema in mice. Shows no cytotoxicity in vitro. Has a strong anticoagulant effect in vitro. PLA2 catalyzes the calcium-dependent hydrolysis of the 2-acyl groups in 3-sn-phosphoglycerides. The polypeptide is Acidic phospholipase A2 (Micrurus dumerilii (Coral snake)).